Here is a 1026-residue protein sequence, read N- to C-terminus: Isoleucine--tRNA ligase (1026 aa).

Residues 51–61 (PTANGRPHIGH) carry the 'HIGH' region motif. A 'KMSKS' region motif is present at residues 591-595 (KMSKS). Position 594 (lysine 594) interacts with ATP.

Belongs to the class-I aminoacyl-tRNA synthetase family. IleS type 2 subfamily. As to quaternary structure, monomer. The cofactor is Zn(2+).

It localises to the cytoplasm. It catalyses the reaction tRNA(Ile) + L-isoleucine + ATP = L-isoleucyl-tRNA(Ile) + AMP + diphosphate. Functionally, catalyzes the attachment of isoleucine to tRNA(Ile). As IleRS can inadvertently accommodate and process structurally similar amino acids such as valine, to avoid such errors it has two additional distinct tRNA(Ile)-dependent editing activities. One activity is designated as 'pretransfer' editing and involves the hydrolysis of activated Val-AMP. The other activity is designated 'posttransfer' editing and involves deacylation of mischarged Val-tRNA(Ile). The chain is Isoleucine--tRNA ligase from Thermoplasma acidophilum (strain ATCC 25905 / DSM 1728 / JCM 9062 / NBRC 15155 / AMRC-C165).